The following is a 251-amino-acid chain: Aliphatic sulfonates import ATP-binding protein SsuB (251 aa).

The ABC transporter domain occupies 3–231 (VSIDGVSKYF…PRSKTSESFQ (229 aa)). An ATP-binding site is contributed by 39-46 (GPSGCGKS).

The protein belongs to the ABC transporter superfamily. Aliphatic sulfonates importer (TC 3.A.1.17.2) family. The complex is composed of two ATP-binding proteins (SsuB), two transmembrane proteins (SsuC) and a solute-binding protein (SsuA).

The protein resides in the cell membrane. It catalyses the reaction ATP + H2O + aliphatic sulfonate-[sulfonate-binding protein]Side 1 = ADP + phosphate + aliphatic sulfonateSide 2 + [sulfonate-binding protein]Side 1.. Its function is as follows. Part of the ABC transporter complex SsuABC involved in aliphatic sulfonates import. Responsible for energy coupling to the transport system. The polypeptide is Aliphatic sulfonates import ATP-binding protein SsuB (Bacillus cereus (strain ATCC 10987 / NRS 248)).